The chain runs to 99 residues: Nucleoid-associated protein MGAS2096_Spy1605 (99 aa).

This sequence belongs to the YbaB/EbfC family. As to quaternary structure, homodimer.

Its subcellular location is the cytoplasm. The protein resides in the nucleoid. In terms of biological role, binds to DNA and alters its conformation. May be involved in regulation of gene expression, nucleoid organization and DNA protection. This Streptococcus pyogenes serotype M12 (strain MGAS2096) protein is Nucleoid-associated protein MGAS2096_Spy1605.